A 261-amino-acid polypeptide reads, in one-letter code: MNPSQHAEQFQSQLANYVPQFTPEFWPVWLIIAGVLLVGMWLVLGLHALLRARGVKKSATDHGEKIYLYSKAVRLWHWSNALLFVLLLASGLINHFAMVGATAVKSLVAVHEVCGFLLLACWLGFVLINAVGDNGHHYRIRRQGWLERAAKQTRFYLFGIMQGEEHPFPATTQSKFNPLQQVAYVGVMYGLLPLLLLTGLLCLYPQAVGDVFPGVRYWLLQTHFALAFISLFFIFGHLYLCTTGRTPHETFKSMVDGYHRH.

A helical membrane pass occupies residues 25-45 (FWPVWLIIAGVLLVGMWLVLG). Position 77 (His-77) interacts with heme b. Transmembrane regions (helical) follow at residues 81–101 (ALLF…MVGA), 108–128 (VAVH…FVLI), and 182–202 (VAYV…GLLC). His-111 serves as a coordination point for heme b. The heme b site is built by His-223 and His-237. The helical transmembrane segment at 224–244 (FALAFISLFFIFGHLYLCTTG) threads the bilayer. A menaquinone is bound at residue His-237.

The protein belongs to the PhsC family. The cofactor is heme.

Its subcellular location is the cell inner membrane. This is Putative cytochrome YdhU (ydhU) from Escherichia coli (strain K12).